Here is a 284-residue protein sequence, read N- to C-terminus: Bifunctional protein FolD 1 (284 aa).

NADP(+) is bound by residues 164 to 166 (GRS), S189, and I230.

Belongs to the tetrahydrofolate dehydrogenase/cyclohydrolase family. Homodimer.

It catalyses the reaction (6R)-5,10-methylene-5,6,7,8-tetrahydrofolate + NADP(+) = (6R)-5,10-methenyltetrahydrofolate + NADPH. The catalysed reaction is (6R)-5,10-methenyltetrahydrofolate + H2O = (6R)-10-formyltetrahydrofolate + H(+). It participates in one-carbon metabolism; tetrahydrofolate interconversion. In terms of biological role, catalyzes the oxidation of 5,10-methylenetetrahydrofolate to 5,10-methenyltetrahydrofolate and then the hydrolysis of 5,10-methenyltetrahydrofolate to 10-formyltetrahydrofolate. The sequence is that of Bifunctional protein FolD 1 from Rubrobacter xylanophilus (strain DSM 9941 / JCM 11954 / NBRC 16129 / PRD-1).